The primary structure comprises 287 residues: Acetylglutamate kinase (287 aa).

Substrate is bound by residues 70–71 (GG), R92, and N184.

This sequence belongs to the acetylglutamate kinase family. ArgB subfamily.

It is found in the cytoplasm. It carries out the reaction N-acetyl-L-glutamate + ATP = N-acetyl-L-glutamyl 5-phosphate + ADP. Its pathway is amino-acid biosynthesis; L-arginine biosynthesis; N(2)-acetyl-L-ornithine from L-glutamate: step 2/4. Its function is as follows. Catalyzes the ATP-dependent phosphorylation of N-acetyl-L-glutamate. The protein is Acetylglutamate kinase of Dinoroseobacter shibae (strain DSM 16493 / NCIMB 14021 / DFL 12).